The following is a 172-amino-acid chain: Translationally-controlled tumor protein homolog (172 aa).

Residues 1-172 (MIIYRDCISQ…FKDGLEMEKC (172 aa)) enclose the TCTP domain.

The protein belongs to the TCTP family. As to expression, expressed by the venom gland.

The protein localises to the secreted. Its function is as follows. Venom protein that causes edema, enhances vascular permeability and is likely related to the inflammatory activity of the venom. The chain is Translationally-controlled tumor protein homolog from Crotalus adamanteus (Eastern diamondback rattlesnake).